A 511-amino-acid chain; its full sequence is MFS-type transporper mpsC (511 aa).

The segment covering 1–35 has biased composition (basic and acidic residues); that stretch reads MTSSTESKHSNDESTDLEKQDAEESHGLPEERKQD. A disordered region spans residues 1–65; that stretch reads MTSSTESKHS…PDDPANPMNW (65 aa). 7 consecutive transmembrane segments (helical) span residues 74-94, 108-128, 147-167, 169-189, 201-221, 228-248, and 303-323; these read VVMASLTTLFANITSTAFAPA, ITAALTVSIYLLGFAFGPLVI, ITVAFLIGCAQAKNLGMFLVF, LITGIAGSGPGTIGGGTIADV, AFAMGPLMGPVLGPLMSGFIA, WVFRVLCIATGVMTIVLYFVM, and PITLLLSLYCAFVFGLLILLF. Asn337 is a glycosylation site (N-linked (GlcNAc...) asparagine). The next 5 membrane-spanning stretches (helical) occupy residues 342 to 362, 383 to 403, 411 to 431, 443 to 465, and 476 to 496; these read GLSYLGLGFGLAIGLVLFGML, LLLMVWFAPVIPGGFFWYGWT, ILPMMGTSLIGMGALMVMMPI, VAASALAANTLLRSLAGCFLPLA, and GWGNTLLGFIAIGFTCLPILF.

Belongs to the major facilitator superfamily.

The protein resides in the membrane. In terms of biological role, MFS-type transporper; part of the gene cluster that mediates the biosynthesis of macrophasetins, 3-decalinoyltetramic acids (DTAs) which feature a tetramate (pyrrolidine-2,4-dione) unit connected to a decalin fragment and that have potent bioactivities. Efflux pump that might be required for efficient secretion of macrophasetins. The sequence is that of MFS-type transporper mpsC from Macrophomina phaseolina (strain MS6) (Charcoal rot fungus).